The primary structure comprises 310 residues: MVVSMREGEIISLFMKHFERHSLGDDAGFIKLNNSWLLVTSDMLVWKTDVPDFMTPEDAGRKVVTMNVSDIAAMGGRPMAFFFSLAVPGDVSEDILRGIARGINEGSKVYKLKIVSGDTNEADDIIIDGGSLGIGKRLLLRSNAKPGDLVCVTGDLGRPLTALLLWMRGEKIPREIEEKARNPRARVEEGVKLSSLANSAIDISDGLSKELWEIANASNVRIIIEEERLPISDSVKEIVSDPVKVALASGEEFELLFTIPREKVEELDIDFKIIGRVEGGNGVYIKRGRKIEELEVLGWEHLAGGIDVEL.

Mg(2+)-binding residues include aspartate 26, threonine 40, serine 41, and aspartate 42. Residue aspartate 49 coordinates substrate. Mg(2+)-binding residues include aspartate 70 and aspartate 118. ATP contacts are provided by residues 117-118 (GD) and arginine 141. Aspartate 202 is a binding site for Mg(2+). Residue serine 204 participates in ATP binding. Aspartate 205 contributes to the Mg(2+) binding site. 2 residues coordinate substrate: glutamate 251 and tryptophan 299.

Belongs to the thiamine-monophosphate kinase family.

It catalyses the reaction thiamine phosphate + ATP = thiamine diphosphate + ADP. It functions in the pathway cofactor biosynthesis; thiamine diphosphate biosynthesis; thiamine diphosphate from thiamine phosphate: step 1/1. Catalyzes the ATP-dependent phosphorylation of thiamine-monophosphate (TMP) to form thiamine-pyrophosphate (TPP), the active form of vitamin B1. This Pyrococcus abyssi (strain GE5 / Orsay) protein is Thiamine-monophosphate kinase.